We begin with the raw amino-acid sequence, 627 residues long: Phosphomethylpyrimidine synthase (627 aa).

The segment covering 1–24 (MSATQKNNITRLEQLDRQSTQPFP) has biased composition (polar residues). The interval 1-29 (MSATQKNNITRLEQLDRQSTQPFPNSRKV) is disordered. Substrate-binding positions include Asn231, Met260, Tyr289, His325, 345-347 (SRG), 386-389 (DGLR), and Glu425. His429 lines the Zn(2+) pocket. Tyr452 lines the substrate pocket. His493 is a Zn(2+) binding site. Residues Cys573, Cys576, and Cys581 each coordinate [4Fe-4S] cluster.

This sequence belongs to the ThiC family. In terms of assembly, homodimer. It depends on [4Fe-4S] cluster as a cofactor.

The enzyme catalyses 5-amino-1-(5-phospho-beta-D-ribosyl)imidazole + S-adenosyl-L-methionine = 4-amino-2-methyl-5-(phosphooxymethyl)pyrimidine + CO + 5'-deoxyadenosine + formate + L-methionine + 3 H(+). It participates in cofactor biosynthesis; thiamine diphosphate biosynthesis. Functionally, catalyzes the synthesis of the hydroxymethylpyrimidine phosphate (HMP-P) moiety of thiamine from aminoimidazole ribotide (AIR) in a radical S-adenosyl-L-methionine (SAM)-dependent reaction. This chain is Phosphomethylpyrimidine synthase, found in Pseudomonas paraeruginosa (strain DSM 24068 / PA7) (Pseudomonas aeruginosa (strain PA7)).